The sequence spans 292 residues: Phosphatidylglycerol--prolipoprotein diacylglyceryl transferase (292 aa).

The next 4 helical transmembrane spans lie at 24–44, 65–85, 110–130, and 136–156; these read ISVH…LLIA, FFIW…VLIY, GISG…AIIF, and QSFW…YVFG. Arg157 contacts a 1,2-diacyl-sn-glycero-3-phospho-(1'-sn-glycerol). 3 helical membrane-spanning segments follow: residues 192-212, 219-239, and 256-276; these read SQLF…ICLL, GTLL…CEYF, and GQIL…FVFV.

It belongs to the Lgt family.

It is found in the cell inner membrane. The enzyme catalyses L-cysteinyl-[prolipoprotein] + a 1,2-diacyl-sn-glycero-3-phospho-(1'-sn-glycerol) = an S-1,2-diacyl-sn-glyceryl-L-cysteinyl-[prolipoprotein] + sn-glycerol 1-phosphate + H(+). Its pathway is protein modification; lipoprotein biosynthesis (diacylglyceryl transfer). Functionally, catalyzes the transfer of the diacylglyceryl group from phosphatidylglycerol to the sulfhydryl group of the N-terminal cysteine of a prolipoprotein, the first step in the formation of mature lipoproteins. This Helicobacter hepaticus (strain ATCC 51449 / 3B1) protein is Phosphatidylglycerol--prolipoprotein diacylglyceryl transferase.